The sequence spans 376 residues: Chaperone protein DnaJ (376 aa).

The 66-residue stretch at 5 to 70 folds into the J domain; sequence DYYEVLGVGR…DKKAAYDQFG (66 aa). Residues 132–210 form a CR-type zinc finger; that stretch reads GLTKELRIPT…CHGDGRVEKS (79 aa). Zn(2+) contacts are provided by Cys145, Cys148, Cys162, Cys165, Cys184, Cys187, Cys198, and Cys201. 4 CXXCXGXG motif repeats span residues 145–152, 162–169, 184–191, and 198–205; these read CDLCDGSG, CTTCHGQG, CPTCHGRG, and CTKCHGDG.

This sequence belongs to the DnaJ family. In terms of assembly, homodimer. Zn(2+) serves as cofactor.

The protein resides in the cytoplasm. Participates actively in the response to hyperosmotic and heat shock by preventing the aggregation of stress-denatured proteins and by disaggregating proteins, also in an autonomous, DnaK-independent fashion. Unfolded proteins bind initially to DnaJ; upon interaction with the DnaJ-bound protein, DnaK hydrolyzes its bound ATP, resulting in the formation of a stable complex. GrpE releases ADP from DnaK; ATP binding to DnaK triggers the release of the substrate protein, thus completing the reaction cycle. Several rounds of ATP-dependent interactions between DnaJ, DnaK and GrpE are required for fully efficient folding. Also involved, together with DnaK and GrpE, in the DNA replication of plasmids through activation of initiation proteins. The chain is Chaperone protein DnaJ from Shewanella putrefaciens (strain CN-32 / ATCC BAA-453).